A 306-amino-acid polypeptide reads, in one-letter code: Glutaminase (306 aa).

Residues serine 64, asparagine 115, glutamate 159, asparagine 166, tyrosine 190, tyrosine 242, and valine 260 each coordinate substrate.

It belongs to the glutaminase family. In terms of assembly, homotetramer.

It carries out the reaction L-glutamine + H2O = L-glutamate + NH4(+). The sequence is that of Glutaminase from Aliivibrio fischeri (strain ATCC 700601 / ES114) (Vibrio fischeri).